Consider the following 239-residue polypeptide: Ras-like protein B (239 aa).

GTP-binding positions include 13–18, 29–35, 59–60, 139–142, and 169–171; these read GVGKTA, VETYDPT, AG, NKSD, and SAK. Positions 32–40 match the Effector region motif; that stretch reads YDPTIEDSY. Residues 191–227 form a disordered region; that stretch reads RQQQQGGRAQDRRPTGLGPMRDRDAGPEYPKTFRPDR. Basic and acidic residues predominate over residues 199–226; sequence AQDRRPTGLGPMRDRDAGPEYPKTFRPD.

Belongs to the small GTPase superfamily. Ras family. In terms of assembly, interacts with mpkA.

It catalyses the reaction GTP + H2O = GDP + phosphate + H(+). In terms of biological role, ras-like protein involved in the activation of Ras protein signal transduction. Ras proteins bind GDP/GTP and possess intrinsic GTPase activity. Plays a role in hyphal morphology and conidiophore development. Required for full virulence. In Aspergillus fumigatus (strain ATCC MYA-4609 / CBS 101355 / FGSC A1100 / Af293) (Neosartorya fumigata), this protein is Ras-like protein B.